The sequence spans 412 residues: Protein trichome birefringence-like 13 (412 aa).

The helical; Signal-anchor for type II membrane protein transmembrane segment at 9–29 (PSLFPLLSLLCFISIFLLLSL) threads the bilayer. The short motif at 137–139 (GDS) is the GDS motif element. The DCXHWCLPGXXDXWN motif signature appears at 385–399 (DCMHWCLPGLTDTWN).

It belongs to the PC-esterase family. TBL subfamily.

The protein localises to the membrane. In terms of biological role, may act as a bridging protein that binds pectin and other cell wall polysaccharides. Probably involved in maintaining esterification of pectins. May be involved in the specific O-acetylation of cell wall polymers. This Arabidopsis thaliana (Mouse-ear cress) protein is Protein trichome birefringence-like 13 (TBL13).